Here is a 389-residue protein sequence, read N- to C-terminus: MLLALAQWLQNDVGFLRVFSYLTFRAVAATITALLIGLVCGPWVIRKLTQMKVGQAVRKDGPQTHLVKSGTPTMGGVLILIGIAVSTLLWADLTNRFIWIVMLVTFGFGVIGWVDDYRKVVYKDPRGMSSREKYFWQSLIGLFAAVYLAFSVSEASNVRVFDLFMAWVRSGLSMGLPARADLLLPFLKSMTYPLGVWGFIALTYLVIVGSSNAVNLTDGLDGLVIMPVVLVGSSLGVFAYVMGSAVYSKYLLFPHIAGAGEMLIFCSAMGGAGLAFLWFNTHPAQVFMGDVGALALGGALGTIAVIVRQEIVLFIMGGIFVAETVSVMLQVTWFKFTKARFGEGRRIFKMAPLHHHFELSGWKETQVVVRFWIITLMLCLFGLSTLKLR.

10 helical membrane passes run arginine 25 to isoleucine 45, threonine 73 to leucine 93, phenylalanine 97 to tyrosine 117, phenylalanine 135 to alanine 155, serine 189 to glycine 209, glycine 222 to methionine 242, alanine 259 to phenylalanine 279, valine 286 to isoleucine 306, isoleucine 311 to valine 331, and glutamine 366 to leucine 386.

Belongs to the glycosyltransferase 4 family. MraY subfamily. The cofactor is Mg(2+).

The protein resides in the cell inner membrane. It carries out the reaction UDP-N-acetyl-alpha-D-muramoyl-L-alanyl-gamma-D-glutamyl-meso-2,6-diaminopimeloyl-D-alanyl-D-alanine + di-trans,octa-cis-undecaprenyl phosphate = di-trans,octa-cis-undecaprenyl diphospho-N-acetyl-alpha-D-muramoyl-L-alanyl-D-glutamyl-meso-2,6-diaminopimeloyl-D-alanyl-D-alanine + UMP. It participates in cell wall biogenesis; peptidoglycan biosynthesis. Catalyzes the initial step of the lipid cycle reactions in the biosynthesis of the cell wall peptidoglycan: transfers peptidoglycan precursor phospho-MurNAc-pentapeptide from UDP-MurNAc-pentapeptide onto the lipid carrier undecaprenyl phosphate, yielding undecaprenyl-pyrophosphoryl-MurNAc-pentapeptide, known as lipid I. The polypeptide is Phospho-N-acetylmuramoyl-pentapeptide-transferase (Paraburkholderia phymatum (strain DSM 17167 / CIP 108236 / LMG 21445 / STM815) (Burkholderia phymatum)).